Reading from the N-terminus, the 254-residue chain is Transcription factor bHLH51 (254 aa).

The region spanning 62 to 111 (SLSRSHRLAEKRRRDRINSHLTALRKLVPNSDKLDKAALLATVIEQVKEL) is the bHLH domain.

In terms of assembly, homodimer. As to expression, expressed constitutively in roots, stems, and flowers.

The protein localises to the nucleus. The protein is Transcription factor bHLH51 (BHLH51) of Arabidopsis thaliana (Mouse-ear cress).